A 203-amino-acid chain; its full sequence is Imidazoleglycerol-phosphate dehydratase (203 aa).

Belongs to the imidazoleglycerol-phosphate dehydratase family.

The protein localises to the cytoplasm. It carries out the reaction D-erythro-1-(imidazol-4-yl)glycerol 3-phosphate = 3-(imidazol-4-yl)-2-oxopropyl phosphate + H2O. It functions in the pathway amino-acid biosynthesis; L-histidine biosynthesis; L-histidine from 5-phospho-alpha-D-ribose 1-diphosphate: step 6/9. The protein is Imidazoleglycerol-phosphate dehydratase of Deinococcus geothermalis (strain DSM 11300 / CIP 105573 / AG-3a).